The primary structure comprises 1030 residues: uncharacterized protein (1030 aa).

Positions 1–15 are enriched in polar residues; sequence MSENSTDSKNFQFSE. The tract at residues 1–53 is disordered; that stretch reads MSENSTDSKNFQFSEGSRESSNDELKVLLRDTETKEDEKSSFSNSEEESIIEN. Basic and acidic residues predominate over residues 16-40; that stretch reads GSRESSNDELKVLLRDTETKEDEKS. Position 41 is a phosphoserine (Ser-41). The Helicase ATP-binding domain occupies 134-290; sequence IKCVERMESV…WISEIHKQPC (157 aa). An ATP-binding site is contributed by 147–154; that stretch reads AHTSAGKT. The DEVH box signature appears at 238–241; that stretch reads DEVH. A Helicase C-terminal domain is found at 357–561; it reads SLERIINMVL…GMILNLMRIE (205 aa).

Belongs to the helicase family. SKI2 subfamily.

The protein resides in the nucleus. This is an uncharacterized protein from Schizosaccharomyces pombe (strain 972 / ATCC 24843) (Fission yeast).